The sequence spans 254 residues: 5'-nucleotidase SurE (254 aa).

D8, D9, S39, and N91 together coordinate a divalent metal cation.

This sequence belongs to the SurE nucleotidase family. A divalent metal cation is required as a cofactor.

It localises to the cytoplasm. The catalysed reaction is a ribonucleoside 5'-phosphate + H2O = a ribonucleoside + phosphate. Its function is as follows. Nucleotidase that shows phosphatase activity on nucleoside 5'-monophosphates. The chain is 5'-nucleotidase SurE from Pseudoalteromonas translucida (strain TAC 125).